Reading from the N-terminus, the 187-residue chain is Peptide deformylase (187 aa).

Fe cation contacts are provided by C107 and H149. The active site involves E150. H153 is a binding site for Fe cation.

It belongs to the polypeptide deformylase family. The cofactor is Fe(2+).

It carries out the reaction N-terminal N-formyl-L-methionyl-[peptide] + H2O = N-terminal L-methionyl-[peptide] + formate. Its function is as follows. Removes the formyl group from the N-terminal Met of newly synthesized proteins. Requires at least a dipeptide for an efficient rate of reaction. N-terminal L-methionine is a prerequisite for activity but the enzyme has broad specificity at other positions. This chain is Peptide deformylase, found in Microchaete diplosiphon (Fremyella diplosiphon).